Consider the following 217-residue polypeptide: Large ribosomal subunit protein bL25 (217 aa).

Residues Val-178–Glu-217 are disordered. The span at Glu-184–Val-205 shows a compositional bias: acidic residues. The span at Gly-206–Glu-217 shows a compositional bias: basic and acidic residues.

It belongs to the bacterial ribosomal protein bL25 family. CTC subfamily. Part of the 50S ribosomal subunit; part of the 5S rRNA/L5/L18/L25 subcomplex. Contacts the 5S rRNA. Binds to the 5S rRNA independently of L5 and L18.

This is one of the proteins that binds to the 5S RNA in the ribosome where it forms part of the central protuberance. The chain is Large ribosomal subunit protein bL25 from Staphylococcus aureus (strain MRSA252).